Here is a 421-residue protein sequence, read N- to C-terminus: Expansin-like protein DDB_G0293186 (421 aa).

Residues 1–20 (MRTLKLIILLILSTFKTINS) form the signal peptide. N19 carries N-linked (GlcNAc...) asparagine glycosylation. Residues 43-139 (GGQCGLPLPG…QKVSCGFSGY (97 aa)) enclose the Expansin-like EG45 domain. Cystine bridges form between C46–C70 and C73–C134. 2 N-linked (GlcNAc...) asparagine glycosylation sites follow: N117 and N391.

It belongs to the expansin family. Expansin A subfamily.

Its subcellular location is the secreted. In terms of biological role, may serve to lubricate the movement of the cellulose microfibrils during cell growth and wall extension and/or may serve to maintain the fluid state of the slug cell wall. The sequence is that of Expansin-like protein DDB_G0293186 from Dictyostelium discoideum (Social amoeba).